Here is a 120-residue protein sequence, read N- to C-terminus: Immunoglobulin kappa variable 2-112 (120 aa).

Residues 1–20 form the signal peptide; that stretch reads MRCSLQFLGVLMFWISGVSG. The tract at residues 21 to 43 is framework-1; sequence DIVITQDELSNPVTSGESVSISC. Cys43 and Cys113 are joined by a disulfide. The complementarity-determining-1 stretch occupies residues 44–59; that stretch reads RSSKSLLYKDGKTYLN. The segment at 60–74 is framework-2; that stretch reads WFLQRPGQSPQLLIY. Residues 75-81 form a complementarity-determining-2 region; it reads LMSTRAS. Positions 82 to 113 are framework-3; it reads GVSDRFSGSGSGTDFTLEISRVKAEDVGVYYC. Residues 114-120 are complementarity-determining-3; it reads QQLVEYP.

This chain is Immunoglobulin kappa variable 2-112, found in Mus musculus (Mouse).